A 329-amino-acid chain; its full sequence is Ketol-acid reductoisomerase (NADP(+)) (329 aa).

In terms of domain architecture, KARI N-terminal Rossmann spans 2–182 (ARMYYEKDVD…GATRAGVLET (181 aa)). NADP(+)-binding positions include 25 to 28 (YGSQ), S51, S53, and 83 to 86 (DEKQ). H108 is a catalytic residue. G134 is an NADP(+) binding site. The KARI C-terminal knotted domain occupies 183-328 (TFKEETETDL…RNLRSMMSFL (146 aa)). 4 residues coordinate Mg(2+): D191, E195, E227, and E231. S252 contacts substrate.

The protein belongs to the ketol-acid reductoisomerase family. Mg(2+) serves as cofactor.

It catalyses the reaction (2R)-2,3-dihydroxy-3-methylbutanoate + NADP(+) = (2S)-2-acetolactate + NADPH + H(+). The enzyme catalyses (2R,3R)-2,3-dihydroxy-3-methylpentanoate + NADP(+) = (S)-2-ethyl-2-hydroxy-3-oxobutanoate + NADPH + H(+). Its pathway is amino-acid biosynthesis; L-isoleucine biosynthesis; L-isoleucine from 2-oxobutanoate: step 2/4. It participates in amino-acid biosynthesis; L-valine biosynthesis; L-valine from pyruvate: step 2/4. In terms of biological role, involved in the biosynthesis of branched-chain amino acids (BCAA). Catalyzes an alkyl-migration followed by a ketol-acid reduction of (S)-2-acetolactate (S2AL) to yield (R)-2,3-dihydroxy-isovalerate. In the isomerase reaction, S2AL is rearranged via a Mg-dependent methyl migration to produce 3-hydroxy-3-methyl-2-ketobutyrate (HMKB). In the reductase reaction, this 2-ketoacid undergoes a metal-dependent reduction by NADPH to yield (R)-2,3-dihydroxy-isovalerate. This chain is Ketol-acid reductoisomerase (NADP(+)), found in Clostridioides difficile (strain 630) (Peptoclostridium difficile).